Consider the following 396-residue polypeptide: Elongation factor Tu (396 aa).

The 197-residue stretch at 10-206 (KPHCNIGTIG…AVDAYIPQPE (197 aa)) folds into the tr-type G domain. Positions 19-26 (GHVDHGKT) are G1. Residue 19-26 (GHVDHGKT) coordinates GTP. Residue Thr-26 participates in Mg(2+) binding. The segment at 60-64 (GITIS) is G2. The segment at 81–84 (DCPG) is G3. Residues 81–85 (DCPGH) and 136–139 (NKCD) contribute to the GTP site. A G4 region spans residues 136 to 139 (NKCD). The G5 stretch occupies residues 174 to 176 (SAL).

This sequence belongs to the TRAFAC class translation factor GTPase superfamily. Classic translation factor GTPase family. EF-Tu/EF-1A subfamily. As to quaternary structure, monomer.

The protein localises to the cytoplasm. The enzyme catalyses GTP + H2O = GDP + phosphate + H(+). GTP hydrolase that promotes the GTP-dependent binding of aminoacyl-tRNA to the A-site of ribosomes during protein biosynthesis. In Rhodopseudomonas palustris (strain BisB18), this protein is Elongation factor Tu.